The primary structure comprises 517 residues: Sphingolipid C9-methyltransferase A (517 aa).

2 helical membrane-spanning segments follow: residues 58-78 and 80-100; these read LLILLLVVIPWYTARQIGGGL and TTIFFAIFTTIPILMAFWSIA. S-adenosyl-L-methionine is bound by residues 223–224, 286–291, and 316–317; these read YT, TLGRNQ, and YR. A glycan (N-linked (GlcNAc...) asparagine) is linked at Asn-290. An N-linked (GlcNAc...) asparagine glycan is attached at Asn-478.

The protein belongs to the CFA/CMAS family.

The protein localises to the membrane. The enzyme catalyses a (4E,8E)-4-sphinga-4,8-dienine ceramide + S-adenosyl-L-methionine = a 9-methyl-(4E,8E)-sphinga-4,8-dienine ceramide + S-adenosyl-L-homocysteine + H(+). It functions in the pathway lipid metabolism; sphingolipid metabolism. In terms of biological role, catalyzes methylation of the sphingoid base component of glucosylceramides (GluCers) at the C9-position. Sphingolipid C9-methylation requires 4,8-desaturated ceramides as substrates. Glucosylceramides play important roles in growth, differentiation and pathogenicity. The methyl group at the C9-position distinguishes fungal glucosylceramides from those of plants and animals and may thus play a role in host-pathogen interactions enabling the host to recognize the fungal attack and initiate specific defense responses. The chain is Sphingolipid C9-methyltransferase A from Emericella nidulans (strain FGSC A4 / ATCC 38163 / CBS 112.46 / NRRL 194 / M139) (Aspergillus nidulans).